The chain runs to 428 residues: Elongation factor 1-alpha (428 aa).

A tr-type G domain is found at 5–225; it reads KPILNVAFIG…DAFQPPEKPT (221 aa). Residues 14-21 form a G1 region; the sequence is GHVDAGKS. 14–21 contributes to the GTP binding site; it reads GHVDAGKS. A Mg(2+)-binding site is contributed by S21. Residues 70-74 are G2; sequence GVTID. Residues 91–94 form a G3 region; it reads DCPG. GTP is bound by residues 91 to 95 and 149 to 152; these read DCPGH and NKMD. The segment at 149–152 is G4; it reads NKMD. Residues 189-191 form a G5 region; sequence ASL.

Belongs to the TRAFAC class translation factor GTPase superfamily. Classic translation factor GTPase family. EF-Tu/EF-1A subfamily.

It localises to the cytoplasm. The catalysed reaction is GTP + H2O = GDP + phosphate + H(+). In terms of biological role, GTP hydrolase that promotes the GTP-dependent binding of aminoacyl-tRNA to the A-site of ribosomes during protein biosynthesis. This Methanococcus maripaludis (strain C6 / ATCC BAA-1332) protein is Elongation factor 1-alpha.